The sequence spans 305 residues: Superkiller complex protein 8 (305 aa).

WD repeat units follow at residues 14 to 57 (AHED…LELQ), 62 to 101 (GHQL…QIRA), 104 to 143 (AGPV…KEYS), 146 to 187 (TRGK…HTLE), 188 to 227 (GHAM…LAAT), 230 to 269 (GHGS…CVHT), and 272 to 305 (DHQD…DCPI).

It belongs to the SKI8 family. In terms of assembly, component of the PAF1 complex. Component of the SKI complex.

Its subcellular location is the nucleus. The protein resides in the cytoplasm. Functionally, component of the PAF1 complex (PAF1C) which has multiple functions during transcription by RNA polymerase II and is implicated in regulation of development and maintenance of embryonic stem cell pluripotency. PAF1C associates with RNA polymerase II through interaction with POLR2A CTD non-phosphorylated and 'Ser-2'- and 'Ser-5'-phosphorylated forms and is involved in transcriptional elongation, acting both independently and synergistically with TCEA1 and in cooperation with the DSIF complex and HTATSF1. Also acts as a component of the SKI complex, a multiprotein complex that assists the RNA-degrading exosome during the mRNA decay and quality-control pathways. The SKI complex catalyzes mRNA extraction from 80S ribosomal complexes in the 3'-5' direction and channels mRNA to the cytosolic exosome for degradation. In Xenopus tropicalis (Western clawed frog), this protein is Superkiller complex protein 8 (skic8).